A 433-amino-acid chain; its full sequence is Keratin, type I cytoskeletal 17 (433 aa).

The tract at residues 1-24 (MTTTIRQFTSSSSIKGSSGLGGGS) is disordered. A head region spans residues 1–83 (MTTTIRQFTS…GGVDGLLAGG (83 aa)). Phosphoserine is present on residues S12 and S13. Residue K15 forms a Glycyl lysine isopeptide (Lys-Gly) (interchain with G-Cter in SUMO1); alternate linkage. K15 is covalently cross-linked (Glycyl lysine isopeptide (Lys-Gly) (interchain with G-Cter in SUMO2); alternate). Residues S25, S32, S34, and S39 each carry the phosphoserine modification. S44 is subject to Phosphoserine; by RPS6KA1. Residues 84-120 (EKATMQNLNDRLASYLDKVRALEEANTELEVKIRDWY) are coil 1A. Residues 84–395 (EKATMQNLND…RLLEGEDAHL (312 aa)) enclose the IF rod domain. Residue T110 is modified to Phosphothreonine. The interval 121–138 (QKQAPGPARDYSAYYHTI) is linker 1. Positions 139–230 (EDLKNKILVA…NHEEEMNALR (92 aa)) are coil 1B. Residues 231-250 (GQVGGEINVEMDAAPGVDLS) form a linker 12 region. The segment at 251–392 (RILSEMRDQY…TYRRLLEGED (142 aa)) is coil 2. Residue K278 forms a Glycyl lysine isopeptide (Lys-Gly) (interchain with G-Cter in SUMO2) linkage. A Phosphothreonine modification is found at T279. S323 is modified (phosphoserine). The segment at 393–433 (AHLTQYKPKEPVTTRQVRTIVEEVQDGKVISSREQVHQTTR) is tail. Residues K399, K401, and K420 each participate in a glycyl lysine isopeptide (Lys-Gly) (interchain with G-Cter in SUMO1); alternate cross-link. Residues K399, K401, and K420 each participate in a glycyl lysine isopeptide (Lys-Gly) (interchain with G-Cter in SUMO2); alternate cross-link.

The protein belongs to the intermediate filament family. As to quaternary structure, heterodimer of a type I and a type II keratin. KRT17 associates with KRT6 isomers (KRT6A or KRT6B). Interacts with TRADD and SFN. Phosphorylation at Ser-44 occurs in a growth- and stress-dependent fashion in skin keratinocytes, it has no effect on filament organization. As to expression, expressed strongly in outer root sheath and medulla region of hair follicle and in the early differentiating epithelial cells (trichocytes) within the hair bulb region. Weak expression in the matrix cells of hair bulb. Also present in the sweat gland within the skin, vibrissae follicle, salivary gland, tooth and thymus.

Its subcellular location is the cytoplasm. In terms of biological role, type I keratin involved in the formation and maintenance of various skin appendages, specifically in determining shape and orientation of hair. Required for the correct growth of hair follicles, in particular for the persistence of the anagen (growth) state. Modulates the function of TNF-alpha in the specific context of hair cycling. Regulates protein synthesis and epithelial cell growth through binding to the adapter protein SFN and by stimulating Akt/mTOR pathway. Involved in tissue repair. May be a marker of basal cell differentiation in complex epithelia and therefore indicative of a certain type of epithelial 'stem cells'. Acts as a promoter of epithelial proliferation by acting a regulator of immune response in skin: promotes Th1/Th17-dominated immune environment contributing to the development of basaloid skin tumors. May act as an autoantigen in the immunopathogenesis of psoriasis, with certain peptide regions being a major target for autoreactive T-cells and hence causing their proliferation. This chain is Keratin, type I cytoskeletal 17 (Krt17), found in Mus musculus (Mouse).